The primary structure comprises 127 residues: HTH-type transcriptional regulator ImmR (127 aa).

Residues 1–12 are compositionally biased toward basic and acidic residues; it reads MSLGKRLKEARQ. Residues 1–22 are disordered; sequence MSLGKRLKEARQKAGYTQKEAA. Positions 7 to 61 constitute an HTH cro/C1-type domain; that stretch reads LKEARQKAGYTQKEAAEKLNIGNNNLSNYERDYRDPDTDTLLKLSNLYNVSTDYL. Residues 18–37 constitute a DNA-binding region (H-T-H motif); it reads QKEAAEKLNIGNNNLSNYER.

The sequence is that of HTH-type transcriptional regulator ImmR (immR) from Bacillus subtilis (strain 168).